The primary structure comprises 146 residues: Kappa-casein (146 aa).

O-linked (GalNAc...) threonine glycosylation is found at Thr97, Thr107, Thr112, and Thr118. Thr121 carries the post-translational modification Phosphothreonine. Ser125 carries the phosphoserine; alternate modification. Residue Ser125 is glycosylated (O-linked (GalNAc...) serine; alternate). Thr142 is a glycosylation site (O-linked (GalNAc...) threonine). Ser143 carries the post-translational modification Phosphoserine.

This sequence belongs to the kappa-casein family. As to expression, mammary gland specific. Secreted in milk.

It localises to the secreted. Its function is as follows. Kappa-casein stabilizes micelle formation, preventing casein precipitation in milk. This Panthera uncia (Snow leopard) protein is Kappa-casein (CSN3).